We begin with the raw amino-acid sequence, 495 residues long: Keratin, type II cytoskeletal 74 (495 aa).

The interval 1–105 (MASCHTAGHR…DPEIQKVRAQ (105 aa)) is head. Residues 106–141 (EREQIKALNDKFASFIDKVRFLEQQNQVLQTKWELL) form a coil 1A region. One can recognise an IF rod domain in the interval 106–419 (EREQIKALND…KLLEGEENRM (314 aa)). The tract at residues 142–160 (QQLDLSNCRRNLEPVYEAH) is linker 1. The tract at residues 161-252 (ISNLRKQLEM…CLYDEEISQL (92 aa)) is coil 1B. The segment at 253-276 (QTHASETSVILSMDNNRDLDLAGI) is linker 12. A coil 2 region spans residues 277-415 (IAEVRAHYED…ATYRKLLEGE (139 aa)). Residues 416–495 (ENRMSGENPS…AAGTLARKTT (80 aa)) form a tail region. Residues 449 to 495 (DSEAGNAVGSPSTPRNSQSKTRGSSVDPRDAQDESAAAAGTLARKTT) form a disordered region. Residues 457-472 (GSPSTPRNSQSKTRGS) show a composition bias toward polar residues.

It belongs to the intermediate filament family. In terms of assembly, heterotetramer of two type I and two type II keratins. As to expression, expressed in epidermis with a particularly strong staining in the nail matrix, nail bed and hyponychium (at protein level).

Its function is as follows. Has a role in hair formation. Specific component of keratin intermediate filaments in the inner root sheath (IRS) of the hair follicle. The polypeptide is Keratin, type II cytoskeletal 74 (Mus musculus (Mouse)).